We begin with the raw amino-acid sequence, 61 residues long: Photosystem II reaction center protein K (61 aa).

The propeptide occupies Met1–Ala24. Residues Ile32–Phe52 form a helical membrane-spanning segment.

This sequence belongs to the PsbK family. In terms of assembly, PSII is composed of 1 copy each of membrane proteins PsbA, PsbB, PsbC, PsbD, PsbE, PsbF, PsbH, PsbI, PsbJ, PsbK, PsbL, PsbM, PsbT, PsbX, PsbY, PsbZ, Psb30/Ycf12, at least 3 peripheral proteins of the oxygen-evolving complex and a large number of cofactors. It forms dimeric complexes.

The protein localises to the plastid. It is found in the chloroplast thylakoid membrane. Functionally, one of the components of the core complex of photosystem II (PSII). PSII is a light-driven water:plastoquinone oxidoreductase that uses light energy to abstract electrons from H(2)O, generating O(2) and a proton gradient subsequently used for ATP formation. It consists of a core antenna complex that captures photons, and an electron transfer chain that converts photonic excitation into a charge separation. The protein is Photosystem II reaction center protein K of Sorghum bicolor (Sorghum).